The following is a 113-amino-acid chain: Probable protein L3 (113 aa).

The chain is Probable protein L3 from Bos taurus (Bovine).